The sequence spans 255 residues: tRNA (guanine-N(1)-)-methyltransferase (255 aa).

S-adenosyl-L-methionine contacts are provided by residues Gly-117 and Leu-137–Leu-142.

This sequence belongs to the RNA methyltransferase TrmD family. In terms of assembly, homodimer.

It is found in the cytoplasm. The enzyme catalyses guanosine(37) in tRNA + S-adenosyl-L-methionine = N(1)-methylguanosine(37) in tRNA + S-adenosyl-L-homocysteine + H(+). Functionally, specifically methylates guanosine-37 in various tRNAs. The protein is tRNA (guanine-N(1)-)-methyltransferase of Paracidovorax citrulli (strain AAC00-1) (Acidovorax citrulli).